We begin with the raw amino-acid sequence, 293 residues long: Polyamine aminopropyltransferase (293 aa).

A PABS domain is found at 10–244 (HIWFTEYHNN…GFWSFTLASK (235 aa)). S-methyl-5'-thioadenosine is bound at residue Gln-39. The spermidine site is built by His-70 and Asp-94. S-methyl-5'-thioadenosine contacts are provided by residues Glu-114 and 145–146 (DG). Asp-163 functions as the Proton acceptor in the catalytic mechanism. 163–166 (DCPD) provides a ligand contact to spermidine. Pro-170 contributes to the S-methyl-5'-thioadenosine binding site.

Belongs to the spermidine/spermine synthase family. In terms of assembly, homodimer or homotetramer.

Its subcellular location is the cytoplasm. It catalyses the reaction S-adenosyl 3-(methylsulfanyl)propylamine + putrescine = S-methyl-5'-thioadenosine + spermidine + H(+). It participates in amine and polyamine biosynthesis; spermidine biosynthesis; spermidine from putrescine: step 1/1. Catalyzes the irreversible transfer of a propylamine group from the amino donor S-adenosylmethioninamine (decarboxy-AdoMet) to putrescine (1,4-diaminobutane) to yield spermidine. In Methanocaldococcus jannaschii (strain ATCC 43067 / DSM 2661 / JAL-1 / JCM 10045 / NBRC 100440) (Methanococcus jannaschii), this protein is Polyamine aminopropyltransferase.